The primary structure comprises 326 residues: MNTSPGTVGSDPVILATAGYDHTVRFWQAHSGICTRTVQHQDSQVNALEITPDRTMIAAAGYQHIRMYDLNSNNPNPIISYDGVNKNVASVGFHEDGRWMYTGGEDCTARIWDLRSRNLQCQRIFQVNAPINCVCLHPNQAELIVGDQSGAIHIWDLKTDHNEQLIPEPEVSITSAHIDPDASYMAAVNSTGNCYVWNLTGGIGDEVTQLIPKTKIPAHTRYALQCRFSPDSTLLATCSADQTCKIWRTSNFSLMTELSIKSSNPGESSRGWMWGCAFSGDSQYIVTASSDNLARLWCVETGEIKREYGGHQKAVVCLAFNDSVLG.

M1 bears the N-acetylmethionine mark. WD repeat units lie at residues 1–37 (MNTS…CTRT), 40–80 (HQDS…PIIS), 83–122 (GVNK…LQCQ), 126–165 (QVNA…NEQL), and 168–207 (EPEV…GDEV). T51 bears the Phosphothreonine mark. K86 is covalently cross-linked (Glycyl lysine isopeptide (Lys-Gly) (interchain with G-Cter in SUMO3)). Residues K215, K245, and K261 each participate in a glycyl lysine isopeptide (Lys-Gly) (interchain with G-Cter in SUMO3) cross-link. The WD 6 repeat unit spans residues 218-257 (AHTRYALQCRFSPDSTLLATCSADQTCKIWRTSNFSLMTE). The WD 7 repeat unit spans residues 268-309 (SSRGWMWGCAFSGDSQYIVTASSDNLARLWCVETGEIKREYG). K305 is covalently cross-linked (Glycyl lysine isopeptide (Lys-Gly) (interchain with G-Cter in SUMO3); alternate). Glycyl lysine isopeptide (Lys-Gly) (interchain with G-Cter in ubiquitin); alternate cross-links involve residues K305 and K313. Residue K313 forms a Glycyl lysine isopeptide (Lys-Gly) (interchain with G-Cter in SUMO1); alternate linkage.

Belongs to the WD repeat LST8 family. As to quaternary structure, part of the mechanistic target of rapamycin complex 1 (mTORC1) which contains MTOR, MLST8 and RPTOR. mTORC1 associates with AKT1S1/PRAS40, which inhibits its activity. mTORC1 binds to and is inhibited by FKBP12-rapamycin. Within mTORC1, interacts directly with MTOR and RPTOR. Component of the mechanistic target of rapamycin complex 2 (mTORC2), consisting in two heterotretramers composed of MTOR, MLST8, RICTOR and MAPKAP1/SIN1. Contrary to mTORC1, mTORC2 does not bind to and is not sensitive to FKBP12-rapamycin. mTORC1 and mTORC2 associate with DEPTOR, which regulates their activity. Interacts with RHEB. Interacts with MEAK7. Interacts with SIK3. Interacts with SLC38A7; this interaction promotes the recruitment of mTORC1 to the lysosome and its subsequent activation. Phosphorylation at Thr-51 by CDK1 promotes ubiquitination by the SCF(FBXW7) complex, followed by degradation. Post-translationally, ubiquitination by the SCF(FBXW7) and SCF(FBXW11) complexes following phosphorylation at Thr-51 by CDK1, leads to its degradation by the proteasome. Ubiquitination at Lys-305 and Lys-313 by TRAF2 via 'Lys-63'-linked polyubiquitin chains inhibits formation of the mTORC2 complex, while promoting formation of the mTORC1 complex: ubiquitination disrupts the interaction between MLST8 and MAPKAP1/SIN1 to favor mTORC1 assembly. Deubiquitination at Lys-305 and Lys-313 by OTUD7B promotes MLST8 interaction with MAPKAP1/SIN1, facilitating mTORC2 assembly. In terms of processing, sumoylation with SUMO1, SUMO2 and SUMO3 promotes assembly of both mTORC1 and mTORC2 complexes.

The protein localises to the lysosome membrane. Its subcellular location is the cytoplasm. Subunit of both mTORC1 and mTORC2, which regulates cell growth and survival in response to nutrient and hormonal signals. mTORC1 is activated in response to growth factors or amino acids. In response to nutrients, mTORC1 is recruited to the lysosome membrane and promotes protein, lipid and nucleotide synthesis by phosphorylating several substrates, such as ribosomal protein S6 kinase (RPS6KB1 and RPS6KB2) and EIF4EBP1 (4E-BP1). In the same time, it inhibits catabolic pathways by phosphorylating the autophagy initiation components ULK1 and ATG13, as well as transcription factor TFEB, a master regulators of lysosomal biogenesis and autophagy. The mTORC1 complex is inhibited in response to starvation and amino acid depletion. Within mTORC1, MLST8 interacts directly with MTOR and enhances its kinase activity. In nutrient-poor conditions, stabilizes the MTOR-RPTOR interaction and favors RPTOR-mediated inhibition of MTOR activity. As part of the mTORC2 complex, transduces signals from growth factors to pathways involved in proliferation, cytoskeletal organization, lipogenesis and anabolic output. mTORC2 is also activated by growth factors, but seems to be nutrient-insensitive. In response to growth factors, mTORC2 phosphorylates and activates AGC protein kinase family members, including AKT (AKT1, AKT2 and AKT3), PKC (PRKCA, PRKCB and PRKCE) and SGK1. mTORC2 functions upstream of Rho GTPases to regulate the actin cytoskeleton, probably by activating one or more Rho-type guanine nucleotide exchange factors. mTORC2 promotes the serum-induced formation of stress-fibers or F-actin. mTORC2 plays a critical role in AKT1 activation by mediating phosphorylation of different sites depending on the context, such as 'Thr-450', 'Ser-473', 'Ser-477' or 'Thr-479', facilitating the phosphorylation of the activation loop of AKT1 on 'Thr-308' by PDPK1/PDK1 which is a prerequisite for full activation. mTORC2 regulates the phosphorylation of SGK1 at 'Ser-422'. mTORC2 also modulates the phosphorylation of PRKCA on 'Ser-657'. Within mTORC2, MLST8 acts as a bridge between MAPKAP1/SIN1 and MTOR. The sequence is that of Target of rapamycin complex subunit LST8 from Bos taurus (Bovine).